The sequence spans 335 residues: Capsular polysaccharide phosphotransferase WcwK (335 aa).

This sequence belongs to the stealth family.

This chain is Capsular polysaccharide phosphotransferase WcwK (wcwK), found in Streptococcus pneumoniae.